Here is a 116-residue protein sequence, read N- to C-terminus: Putative iron-sulfur cluster insertion protein ErpA (116 aa).

Iron-sulfur cluster is bound by residues cysteine 44, cysteine 108, and cysteine 110.

This sequence belongs to the HesB/IscA family. As to quaternary structure, homodimer. Iron-sulfur cluster serves as cofactor.

Its function is as follows. Required for insertion of 4Fe-4S clusters. This chain is Putative iron-sulfur cluster insertion protein ErpA, found in Herminiimonas arsenicoxydans.